A 58-amino-acid polypeptide reads, in one-letter code: Photosystem II reaction center protein K (58 aa).

Residues 1–21 (MLNMISTFFDSSSNFSEAFLA) constitute a propeptide that is removed on maturation. Residues 29 to 49 (IFDPIVDVMPIIPVFFLLLAF) form a helical membrane-spanning segment.

The protein belongs to the PsbK family. As to quaternary structure, PSII is composed of 1 copy each of membrane proteins PsbA, PsbB, PsbC, PsbD, PsbE, PsbF, PsbH, PsbI, PsbJ, PsbK, PsbL, PsbM, PsbT, PsbX, PsbY, PsbZ, Psb30/Ycf12, at least 3 peripheral proteins of the oxygen-evolving complex and a large number of cofactors. It forms dimeric complexes.

The protein resides in the plastid. The protein localises to the chloroplast thylakoid membrane. In terms of biological role, one of the components of the core complex of photosystem II (PSII). PSII is a light-driven water:plastoquinone oxidoreductase that uses light energy to abstract electrons from H(2)O, generating O(2) and a proton gradient subsequently used for ATP formation. It consists of a core antenna complex that captures photons, and an electron transfer chain that converts photonic excitation into a charge separation. This chain is Photosystem II reaction center protein K, found in Chaetosphaeridium globosum (Charophycean green alga).